Here is a 206-residue protein sequence, read N- to C-terminus: Probable GTP-binding protein EngB (206 aa).

Residues 27-201 (SGIEVAFAGR…EEKLNQWYSK (175 aa)) enclose the EngB-type G domain. GTP-binding positions include 35–42 (GRSNAGKS), 62–66 (GRTQL), 80–83 (DLPG), 147–150 (TKAD), and 180–182 (FSS). The Mg(2+) site is built by Ser-42 and Thr-64.

This sequence belongs to the TRAFAC class TrmE-Era-EngA-EngB-Septin-like GTPase superfamily. EngB GTPase family. It depends on Mg(2+) as a cofactor.

Functionally, necessary for normal cell division and for the maintenance of normal septation. The protein is Probable GTP-binding protein EngB of Idiomarina loihiensis (strain ATCC BAA-735 / DSM 15497 / L2-TR).